A 322-amino-acid polypeptide reads, in one-letter code: 4-hydroxy-3-methylbut-2-enyl diphosphate reductase (322 aa).

C15 is a binding site for [4Fe-4S] cluster. 2 residues coordinate (2E)-4-hydroxy-3-methylbut-2-enyl diphosphate: H44 and H77. Dimethylallyl diphosphate contacts are provided by H44 and H77. Isopentenyl diphosphate-binding residues include H44 and H77. C99 lines the [4Fe-4S] cluster pocket. H127 is a (2E)-4-hydroxy-3-methylbut-2-enyl diphosphate binding site. H127 is a binding site for dimethylallyl diphosphate. Isopentenyl diphosphate is bound at residue H127. E129 (proton donor) is an active-site residue. T168 lines the (2E)-4-hydroxy-3-methylbut-2-enyl diphosphate pocket. Position 198 (C198) interacts with [4Fe-4S] cluster. 4 residues coordinate (2E)-4-hydroxy-3-methylbut-2-enyl diphosphate: S226, S227, N228, and S270. S226, S227, N228, and S270 together coordinate dimethylallyl diphosphate. The isopentenyl diphosphate site is built by S226, S227, N228, and S270.

Belongs to the IspH family. Requires [4Fe-4S] cluster as cofactor.

The enzyme catalyses isopentenyl diphosphate + 2 oxidized [2Fe-2S]-[ferredoxin] + H2O = (2E)-4-hydroxy-3-methylbut-2-enyl diphosphate + 2 reduced [2Fe-2S]-[ferredoxin] + 2 H(+). It carries out the reaction dimethylallyl diphosphate + 2 oxidized [2Fe-2S]-[ferredoxin] + H2O = (2E)-4-hydroxy-3-methylbut-2-enyl diphosphate + 2 reduced [2Fe-2S]-[ferredoxin] + 2 H(+). Its pathway is isoprenoid biosynthesis; dimethylallyl diphosphate biosynthesis; dimethylallyl diphosphate from (2E)-4-hydroxy-3-methylbutenyl diphosphate: step 1/1. It participates in isoprenoid biosynthesis; isopentenyl diphosphate biosynthesis via DXP pathway; isopentenyl diphosphate from 1-deoxy-D-xylulose 5-phosphate: step 6/6. Catalyzes the conversion of 1-hydroxy-2-methyl-2-(E)-butenyl 4-diphosphate (HMBPP) into a mixture of isopentenyl diphosphate (IPP) and dimethylallyl diphosphate (DMAPP). Acts in the terminal step of the DOXP/MEP pathway for isoprenoid precursor biosynthesis. In Neisseria meningitidis serogroup C (strain 053442), this protein is 4-hydroxy-3-methylbut-2-enyl diphosphate reductase.